The sequence spans 43 residues: Protein PsbN (43 aa).

The helical transmembrane segment at 5–27 (TIFSIFFSCLLIGLTGYSLYTSF) threads the bilayer.

Belongs to the PsbN family.

It is found in the plastid. Its subcellular location is the chloroplast thylakoid membrane. Functionally, may play a role in photosystem I and II biogenesis. The protein is Protein PsbN of Mesostigma viride (Green alga).